Here is a 61-residue protein sequence, read N- to C-terminus: Small ribosomal subunit protein uS14 (61 aa).

Cys24, Cys27, Cys40, and Cys43 together coordinate Zn(2+).

Belongs to the universal ribosomal protein uS14 family. Zinc-binding uS14 subfamily. As to quaternary structure, part of the 30S ribosomal subunit. Contacts proteins S3 and S10. Zn(2+) serves as cofactor.

Its function is as follows. Binds 16S rRNA, required for the assembly of 30S particles and may also be responsible for determining the conformation of the 16S rRNA at the A site. This is Small ribosomal subunit protein uS14 from Kosmotoga olearia (strain ATCC BAA-1733 / DSM 21960 / TBF 19.5.1).